The primary structure comprises 479 residues: Glucan 1,3-beta-glucosidase 2 (479 aa).

Residues 1-21 (MMLFLIHLMALCCMFVAEVAC) form the signal peptide. N-linked (GlcNAc...) asparagine glycosylation is found at asparagine 25, asparagine 29, asparagine 63, asparagine 104, asparagine 187, and asparagine 193. The Proton donor role is filled by glutamate 227. N-linked (GlcNAc...) asparagine glycosylation is found at asparagine 254, asparagine 285, and asparagine 288. Histidine 306 functions as the Nucleophile in the catalytic mechanism. N-linked (GlcNAc...) asparagine glycans are attached at residues asparagine 318 and asparagine 451. Residue serine 456 is the site of GPI-anchor amidated serine attachment. Positions 457-479 (SASAIASNKMTLLLAFLLVILVI) are cleaved as a propeptide — removed in mature form.

This sequence belongs to the glycosyl hydrolase 5 (cellulase A) family. In terms of processing, predicted to be a substrate for cleavage by KEX2.

Its subcellular location is the cell membrane. It localises to the secreted. It catalyses the reaction Successive hydrolysis of beta-D-glucose units from the non-reducing ends of (1-&gt;3)-beta-D-glucans, releasing alpha-glucose.. Its function is as follows. Beta-glucanases participate in the metabolism of beta-glucan, the main structural component of the cell wall. EXG2 is not heavily involved in the exoglucanase function of the adhesion process. In Candida albicans (strain SC5314 / ATCC MYA-2876) (Yeast), this protein is Glucan 1,3-beta-glucosidase 2 (EXG2).